A 29-amino-acid chain; its full sequence is Dermaseptin-1 (29 aa).

Residue valine 29 is modified to Valine amide.

Expressed by the skin glands.

The protein resides in the secreted. Its function is as follows. Antimicrobial peptide, active against the Gram-positive bacterium S.aureus, the Gram-negative bacteria E.coli and P.aeruginosa, and the yeasts C.albicans and P.brasiliensis. Has hemolytic activity (40% hemolysis at 128 ug/ml). The chain is Dermaseptin-1 from Phyllomedusa tarsius (Brownbelly leaf frog).